Consider the following 100-residue polypeptide: Small ribosomal subunit protein uS14 (100 aa).

Belongs to the universal ribosomal protein uS14 family. As to quaternary structure, part of the 30S ribosomal subunit. Contacts proteins S3 and S10.

Functionally, binds 16S rRNA, required for the assembly of 30S particles and may also be responsible for determining the conformation of the 16S rRNA at the A site. In Trichodesmium erythraeum (strain IMS101), this protein is Small ribosomal subunit protein uS14.